The primary structure comprises 153 residues: Protein SREK1IP1 (153 aa).

Residues 13–30 (AGCRKCGYPGHLTFECRN) form a CCHC-type zinc finger. The tract at residues 44–153 (VSSTSSEDSD…SPNRSEVTKK (110 aa)) is disordered. Ser-52 bears the Phosphoserine mark. The segment covering 66 to 84 (QEKRINEEEEKKKEKSREK) has biased composition (basic and acidic residues). Residues 85 to 94 (IKLKKKRKRS) show a composition bias toward basic residues. A phosphoserine mark is found at Ser-96 and Ser-97. Residues 106–141 (QKKQKYQKKEKKKEKKNKSKKGKHHKKEKKKRKKEK) are compositionally biased toward basic residues.

Interacts with SREK1/SFRS12.

Its function is as follows. Possible splicing regulator involved in the control of cellular survival. The chain is Protein SREK1IP1 (Srek1ip1) from Rattus norvegicus (Rat).